The chain runs to 237 residues: Nodulation protein NolA (237 aa).

An HTH merR-type domain is found at 10–79 (RWRIGELAEA…LVEIRKAMEG (70 aa)). Positions 13–32 (IGELAEATGVTVRTLHHYEH) form a DNA-binding region, H-T-H motif.

Its function is as follows. Involved in genotype-specific nodulation of soybeans. This Bradyrhizobium diazoefficiens (strain JCM 10833 / BCRC 13528 / IAM 13628 / NBRC 14792 / USDA 110) protein is Nodulation protein NolA (nolA).